We begin with the raw amino-acid sequence, 584 residues long: UvrABC system protein C (584 aa).

A GIY-YIG domain is found at 12 to 89; that stretch reads NKPGCYLFFN…IKKYHPKYNV (78 aa). The region spanning 194 to 229 is the UVR domain; it reads NQVKQTLVKQMQKASDNLQFEQAQRIKDQITSLDFI.

It belongs to the UvrC family. As to quaternary structure, interacts with UvrB in an incision complex.

Its subcellular location is the cytoplasm. Its function is as follows. The UvrABC repair system catalyzes the recognition and processing of DNA lesions. UvrC both incises the 5' and 3' sides of the lesion. The N-terminal half is responsible for the 3' incision and the C-terminal half is responsible for the 5' incision. In Mycoplasma mycoides subsp. mycoides SC (strain CCUG 32753 / NCTC 10114 / PG1), this protein is UvrABC system protein C.